A 611-amino-acid polypeptide reads, in one-letter code: Protein KINASE OF THE OUTER CHLOROPLAST MEMBRANE 1 (611 aa).

The Cytoplasmic segment spans residues 1–555 (MASKIIAGKP…LEDFHWAVRP (555 aa)). The Protein kinase domain occupies 39 to 306 (LKLRHRIGRG…TDILLVLKSL (268 aa)). ATP is bound by residues 45–53 (IGRGPFGDV) and K74. The chain crosses the membrane as a helical span at residues 556–572 (LLIAMGLLTAMKLGICV). Residues 573–611 (RKKIGRSKDGKQRDGSTGQGDCKIPDGKGSDKSKWLVFF) are Chloroplast intermembrane-facing. Residues 579–606 (SKDGKQRDGSTGQGDCKIPDGKGSDKSK) are disordered. Positions 595-606 (KIPDGKGSDKSK) are enriched in basic and acidic residues.

It belongs to the protein kinase superfamily. Ser/Thr protein kinase family. As to quaternary structure, associates with the TOC complex containing, at least, translocons at the chloroplast envelope (e.g. TOCs and TICs such as TOC159, TOC75, TOC33 and TIC56).

It is found in the plastid. The protein resides in the chloroplast outer membrane. The catalysed reaction is L-seryl-[protein] + ATP = O-phospho-L-seryl-[protein] + ADP + H(+). It catalyses the reaction L-threonyl-[protein] + ATP = O-phospho-L-threonyl-[protein] + ADP + H(+). Functionally, serine/threonine protein kinase acting as a regulatory component of the plastid protein import machinery by phosphorylating import receptors (e.g. the A-domain of TOC159, TOC120 and TOC132). Supports preprotein import and contributes to efficient chloroplast biogenesis, thus being required for survival during de-etiolation. This chain is Protein KINASE OF THE OUTER CHLOROPLAST MEMBRANE 1, found in Arabidopsis thaliana (Mouse-ear cress).